The sequence spans 245 residues: 2,3-bisphosphoglycerate-dependent phosphoglycerate mutase (245 aa).

Substrate contacts are provided by residues Arg8–Asn15, Thr21–Gly22, Arg60, Glu87–Tyr90, Lys98, Arg114–Arg115, and Gly183–Asn184. The active-site Tele-phosphohistidine intermediate is the His9. Catalysis depends on Glu87, which acts as the Proton donor/acceptor.

The protein belongs to the phosphoglycerate mutase family. BPG-dependent PGAM subfamily.

It carries out the reaction (2R)-2-phosphoglycerate = (2R)-3-phosphoglycerate. It participates in carbohydrate degradation; glycolysis; pyruvate from D-glyceraldehyde 3-phosphate: step 3/5. Its function is as follows. Catalyzes the interconversion of 2-phosphoglycerate and 3-phosphoglycerate. This is 2,3-bisphosphoglycerate-dependent phosphoglycerate mutase from Bacillus cereus (strain ATCC 14579 / DSM 31 / CCUG 7414 / JCM 2152 / NBRC 15305 / NCIMB 9373 / NCTC 2599 / NRRL B-3711).